The chain runs to 310 residues: Malate dehydrogenase (310 aa).

NAD(+) is bound by residues 7–12 (GAGNVG) and D32. Substrate is bound by residues R81 and R87. NAD(+)-binding positions include N94 and 117-119 (VSN). Residues N119 and R150 each coordinate substrate. H174 (proton acceptor) is an active-site residue.

Belongs to the LDH/MDH superfamily. MDH type 3 family.

The catalysed reaction is (S)-malate + NAD(+) = oxaloacetate + NADH + H(+). In terms of biological role, catalyzes the reversible oxidation of malate to oxaloacetate. This Pelodictyon phaeoclathratiforme (strain DSM 5477 / BU-1) protein is Malate dehydrogenase.